A 281-amino-acid chain; its full sequence is UPF0162 protein XF_1494 (281 aa).

TPR repeat units follow at residues 193-226 (VRILRNLHSVYANTNRWDRAARCADRILKLVPNQ) and 227-260 (PEALRDRGLAYLQLGHRSGARNDLTRYLQLYPST).

The protein belongs to the UPF0162 family.

This chain is UPF0162 protein XF_1494, found in Xylella fastidiosa (strain 9a5c).